A 785-amino-acid polypeptide reads, in one-letter code: Mitochondrial intermediate peptidase (785 aa).

Residues 1-27 (MLKAVMPRPWVCSRCVKRQIQSSRGLA) constitute a mitochondrion transit peptide. Residues 26–52 (LATASTQYREPRPVPTDHSAPGAKHDD) form a disordered region. H566 provides a ligand contact to Zn(2+). E567 is an active-site residue. Residues H570 and H573 each contribute to the Zn(2+) site.

This sequence belongs to the peptidase M3 family. Zn(2+) serves as cofactor.

The protein resides in the mitochondrion matrix. It carries out the reaction Release of an N-terminal octapeptide as second stage of processing of some proteins imported into the mitochondrion.. In terms of biological role, cleaves proteins, imported into the mitochondrion, to their mature size. While most mitochondrial precursor proteins are processed to the mature form in one step by mitochondrial processing peptidase (MPP), the sequential cleavage by MIP of an octapeptide after initial processing by MPP is a required step for a subgroup of nuclear-encoded precursor proteins destined for the matrix or the inner membrane. The protein is Mitochondrial intermediate peptidase (oct1) of Sclerotinia sclerotiorum (strain ATCC 18683 / 1980 / Ss-1) (White mold).